Here is a 209-residue protein sequence, read N- to C-terminus: Probable nicotinate-nucleotide adenylyltransferase (209 aa).

It belongs to the NadD family.

The catalysed reaction is nicotinate beta-D-ribonucleotide + ATP + H(+) = deamido-NAD(+) + diphosphate. The protein operates within cofactor biosynthesis; NAD(+) biosynthesis; deamido-NAD(+) from nicotinate D-ribonucleotide: step 1/1. Catalyzes the reversible adenylation of nicotinate mononucleotide (NaMN) to nicotinic acid adenine dinucleotide (NaAD). This is Probable nicotinate-nucleotide adenylyltransferase from Shewanella woodyi (strain ATCC 51908 / MS32).